Reading from the N-terminus, the 411-residue chain is MERIPSAQPPPTCLPKTPGLEHGDLSGMDFAHMYQVYKSRRGIKRSEDSKETYKLPHRLIEKKRRDRINECIAQLKDLLPEHLKLTTLGHLEKAVVLELTLKHVKALTNLIDQQQQKIMALQSGLQAGDLSGKNIEAGQEMFCSGFQTCAREVLQYLAKHENTRDLKSSQLVTHLHRVVSELLQGSASRKPLDSAPKPVDFKEKPSFLAKGSEGPGKNCVPVIQRTFAPSGGEQSGSDTDTDSGYGGELEKGDLRSEQPYFKSDHGRRFTVGERVSTIKQESEEPPTKKSRMQLSDEEGHFVGSDLMGSPFLGPHPHQPPFCLPFYLIPPSATAYLPMLEKCWYPTSVPLLYPGLNTSAAALSSFMNPDKIPTPLLLPQRLPSPLAHSSLDSSALLQALKQIPPLNLETKD.

Residues 1–21 are disordered; it reads MERIPSAQPPPTCLPKTPGLE. Residues 1-139 form an essential for interaction with BMAL1, E-box binding and repressor activity against the CLOCK-BMAL1 heterodimer region; the sequence is MERIPSAQPP…LSGKNIEAGQ (139 aa). The region spanning 52–107 is the bHLH domain; it reads TYKLPHRLIEKKRRDRINECIAQLKDLLPEHLKLTTLGHLEKAVVLELTLKHVKAL. Residues 75-79 form a necessary for interaction with RXRA and repressor activity against RXRA region; sequence LKDLL. Residues 142-175 enclose the Orange domain; it reads FCSGFQTCAREVLQYLAKHENTRDLKSSQLVTHL. Lysine 159 participates in a covalent cross-link: Glycyl lysine isopeptide (Lys-Gly) (interchain with G-Cter in SUMO1, SUMO2 and SUMO3). Lysine 167 is covalently cross-linked (Glycyl lysine isopeptide (Lys-Gly) (interchain with G-Cter in SUMO2)). The interval 186-293 is disordered; sequence SASRKPLDSA…EPPTKKSRMQ (108 aa). A Phosphoserine modification is found at serine 235. A compositionally biased stretch (basic and acidic residues) spans 248 to 271; sequence ELEKGDLRSEQPYFKSDHGRRFTV. Lysine 279 is covalently cross-linked (Glycyl lysine isopeptide (Lys-Gly) (interchain with G-Cter in SUMO1); alternate). Lysine 279 is covalently cross-linked (Glycyl lysine isopeptide (Lys-Gly) (interchain with G-Cter in SUMO1, SUMO2 and SUMO3); alternate). Lysine 279 is covalently cross-linked (Glycyl lysine isopeptide (Lys-Gly) (interchain with G-Cter in SUMO2); alternate). A Glycyl lysine isopeptide (Lys-Gly) (interchain with G-Cter in SUMO2) cross-link involves residue lysine 288. Phosphoserine is present on serine 383.

In terms of assembly, homodimer. Heterodimer with BHLHE41/DEC2. Interacts with TCF3/E47. Interacts with ubiquitin-conjugating enzyme UBE2I/UBC9. Interacts with HDAC1, SUMO1, RXRA and BMAL1. In terms of processing, ubiquitinated; which may lead to proteasomal degradation. Post-translationally, sumoylation inhibits its ubiquitination and promotes its negative regulation of the CLOCK-BMAL1 heterodimer transcriptional activator activity. As to expression, expressed in heart, spleen, lung, liver, muscle, kidney, uterus and gut. Highly expressed in the cerebral cortex, especially in the fifth layer, thalamus, superior colliculus, olfactory bulb, piriform cortex, hippocampus and hypothalamic nuclei.

Its subcellular location is the cytoplasm. It is found in the nucleus. Its function is as follows. Transcriptional repressor involved in the regulation of the circadian rhythm by negatively regulating the activity of the clock genes and clock-controlled genes. Acts as the negative limb of a novel autoregulatory feedback loop (DEC loop) which differs from the one formed by the PER and CRY transcriptional repressors (PER/CRY loop). Both these loops are interlocked as it represses the expression of PER1/2 and in turn is repressed by PER1/2 and CRY1/2. Represses the activity of the circadian transcriptional activator: CLOCK-BMAL1|BMAL2 heterodimer by competing for the binding to E-box elements (5'-CACGTG-3') found within the promoters of its target genes. Negatively regulates its own expression and the expression of DBP and BHLHE41/DEC2. Acts as a corepressor of RXR and the RXR-LXR heterodimers and represses the ligand-induced RXRA and NR1H3/LXRA transactivation activity. May be involved in the regulation of chondrocyte differentiation via the cAMP pathway. Represses the transcription of NR0B2 and attentuates the transactivation of NR0B2 by the CLOCK-BMAL1 complex. Drives the circadian rhythm of blood pressure through transcriptional repression of ATP1B1 in the cardiovascular system. This Rattus norvegicus (Rat) protein is Class E basic helix-loop-helix protein 40 (Bhlhe40).